The sequence spans 123 residues: Highly acidic elicitin 20 (123 aa).

Positions 1-20 are cleaved as a signal peptide; it reads MQFTALFAATAVALVGSVSA. 3 disulfides stabilise this stretch: cysteine 23/cysteine 91, cysteine 47/cysteine 76, and cysteine 71/cysteine 115.

This sequence belongs to the elicitin family.

The protein resides in the secreted. Functionally, induces local and distal defense responses (incompatible hypersensitive reaction) in plants from the solanaceae and cruciferae families. Elicits leaf necrosis and causes the accumulation of pathogenesis-related proteins. Might interact with the lipidic molecules of the plasma membrane. The polypeptide is Highly acidic elicitin 20 (B20) (Phytophthora cryptogea).